The sequence spans 184 residues: Protein Syd (184 aa).

This sequence belongs to the Syd family.

It localises to the cell inner membrane. In terms of biological role, interacts with the SecY protein in vivo. May bind preferentially to an uncomplexed state of SecY, thus functioning either as a chelating agent for excess SecY in the cell or as a regulatory factor that negatively controls the translocase function. This chain is Protein Syd, found in Photobacterium profundum (strain SS9).